A 1158-amino-acid polypeptide reads, in one-letter code: Formin-C (1158 aa).

3 disordered regions span residues 8–29 (INGN…PSVS), 417–523 (PNTS…LSCL), and 990–1052 (INNN…NNSQ). Residues 20 to 388 (QQPQQNPSVS…EYSQRKLEMI (369 aa)) enclose the GBD/FH3 domain. Over residues 417–437 (PNTSDLFDSSTLEDTYDGNND) the composition is skewed to polar residues. Positions 438–481 (TNSCTSISTSSTPIHISQPTTLIVPSTTPNHPPQQSQQTPPLQL) are enriched in low complexity. Residues 479–515 (LQLQKEKEKEKEKEKEKEKEKEKEQQQQQQQSNKQST) are a coiled coil. Basic and acidic residues predominate over residues 482-503 (QKEKEKEKEKEKEKEKEKEKEQ). The region spanning 601 to 998 (TKSPITPSKR…IINNNNNNNN (398 aa)) is the FH2 domain. The region spanning 1134-1158 (SDDPMAVIIEALKTGSPNDMVKRAF) is the DAD domain.

This sequence belongs to the formin homology family. Diaphanous subfamily. As to quaternary structure, interacts (via GBD/FH3 domain) with activated Rho-GTPases.

Its subcellular location is the cytoplasm. It is found in the cytosol. The protein localises to the cytoskeleton. Formins play an important role in the nucleation of actin and the formation of linear actin filaments. This is Formin-C (forC) from Dictyostelium discoideum (Social amoeba).